Reading from the N-terminus, the 496-residue chain is Xylulose kinase (496 aa).

Substrate is bound at residue methionine 83–histidine 84. The active-site Proton acceptor is aspartate 237.

Belongs to the FGGY kinase family.

The enzyme catalyses D-xylulose + ATP = D-xylulose 5-phosphate + ADP + H(+). Functionally, catalyzes the phosphorylation of D-xylulose to D-xylulose 5-phosphate. This is Xylulose kinase from Staphylococcus epidermidis (strain ATCC 35984 / DSM 28319 / BCRC 17069 / CCUG 31568 / BM 3577 / RP62A).